A 362-amino-acid chain; its full sequence is Sterol-4-alpha-carboxylate 3-dehydrogenase, decarboxylating (362 aa).

At methionine 1 the chain carries N-acetylmethionine. The Proton acceptor role is filled by tyrosine 161. Lysine 165 is a binding site for NAD(+). Residues 287–307 (WMAYYLAFLLSLLVMVVSPLI) form a helical membrane-spanning segment. Residues 359–362 (RKDK) carry the Prevents secretion from ER motif.

Belongs to the 3-beta-HSD family. Homodimer.

Its subcellular location is the endoplasmic reticulum membrane. It is found in the lipid droplet. It catalyses the reaction a 3beta-hydroxysteroid-4alpha-carboxylate + NADP(+) = a 3-oxosteroid + CO2 + NADPH. The catalysed reaction is a 3beta-hydroxysteroid-4alpha-carboxylate + NAD(+) = a 3-oxosteroid + CO2 + NADH. The enzyme catalyses 4alpha-carboxyzymosterol + NADP(+) = zymosterone + CO2 + NADPH. It carries out the reaction 4alpha-carboxy-4beta-methyl-5alpha-cholest-8-en-3beta-ol + NADP(+) = 4alpha-methyl-5alpha-cholest-8-en-3-one + CO2 + NADPH. It catalyses the reaction 4alpha-carboxy-5alpha-cholest-8-ene-3beta-ol + NADP(+) = 5alpha-cholest-8-en-3-one + CO2 + NADPH. The catalysed reaction is 4beta-methylzymosterol-4alpha-carboxylate + NADP(+) = 3-dehydro-4-methylzymosterol + CO2 + NADPH. The enzyme catalyses 4beta-methylzymosterol-4alpha-carboxylate + NAD(+) = 3-dehydro-4-methylzymosterol + CO2 + NADH. It carries out the reaction 4alpha-carboxy-5alpha-cholest-8-ene-3beta-ol + NAD(+) = 5alpha-cholest-8-en-3-one + CO2 + NADH. It catalyses the reaction 4alpha-carboxy-4beta-methyl-5alpha-cholest-8-en-3beta-ol + NAD(+) = 4alpha-methyl-5alpha-cholest-8-en-3-one + CO2 + NADH. The catalysed reaction is 4alpha-carboxyzymosterol + NAD(+) = zymosterone + CO2 + NADH. It participates in steroid biosynthesis; zymosterol biosynthesis; zymosterol from lanosterol: step 4/6. Catalyzes the NAD(P)(+)-dependent oxidative decarboxylation of the C4 methyl groups of 4-alpha-carboxysterols in post-squalene cholesterol biosynthesis. Plays a role in the regulation of the endocytic trafficking of EGFR. The protein is Sterol-4-alpha-carboxylate 3-dehydrogenase, decarboxylating (Nsdhl) of Mus musculus (Mouse).